Reading from the N-terminus, the 232-residue chain is Large ribosomal subunit protein uL1 (232 aa).

This sequence belongs to the universal ribosomal protein uL1 family. Part of the 50S ribosomal subunit.

Its function is as follows. Binds directly to 23S rRNA. The L1 stalk is quite mobile in the ribosome, and is involved in E site tRNA release. In terms of biological role, protein L1 is also a translational repressor protein, it controls the translation of the L11 operon by binding to its mRNA. The polypeptide is Large ribosomal subunit protein uL1 (Parabacteroides distasonis (strain ATCC 8503 / DSM 20701 / CIP 104284 / JCM 5825 / NCTC 11152)).